The following is a 163-amino-acid chain: ATP synthase subunit delta, mitochondrial (163 aa).

Residues 1–18 (MLARTIQRFSVVAKRGYA) constitute a mitochondrion transit peptide.

The protein belongs to the ATPase epsilon chain family. In terms of assembly, subunit of the F-type ATPase which has 2 components, CF(1) - the catalytic core - and CF(0) - the membrane proton channel.

The protein localises to the mitochondrion. Its subcellular location is the mitochondrion inner membrane. Mitochondrial membrane ATP synthase (F(1)F(0) ATP synthase or Complex V) produces ATP from ADP in the presence of a proton gradient across the membrane which is generated by electron transport complexes of the respiratory chain. F-type ATPases consist of two structural domains, F(1) - containing the extramembraneous catalytic core, and F(0) - containing the membrane proton channel, linked together by a central stalk and a peripheral stalk. During catalysis, ATP turnover in the catalytic domain of F(1) is coupled via a rotary mechanism of the central stalk subunits to proton translocation. Part of the complex F(1) domain and of the central stalk which is part of the complex rotary element. In Caenorhabditis elegans, this protein is ATP synthase subunit delta, mitochondrial.